Here is a 1020-residue protein sequence, read N- to C-terminus: LLGL scribble cell polarity complex component 2 (1020 aa).

WD repeat units follow at residues 36-69 (SALGYSPSLRILAIGTRSGAIKLYGAPGVEFMGL), 76-117 (VTQI…DESF), 132-169 (ITVVLPHSSCELLYLGTESGNVFVVQLPAFRALEDRTI), 193-227 (ALQEHPRDPNQILIGYSRGLVVIWDLQGSRVLYHF), 233-268 (LENIWWQRDGRLLVSCHSDGSYCQWPVSSEAQQPEP), 282-324 (AITR…GQQT), 332-366 (VIGFTVLTEADPAATFDDPYALVVLAEEELVVIDL), 388-464 (TCSH…YKLS), 508-583 (QKIF…FVLV), 592-653 (TSLA…LRQS), 713-769 (VRTL…KEIQ), 778-830 (GILV…VSAK), 835-888 (LTAL…VRYS), and 902-925 (VFTKYGQGFYLISPSEFERFSLST). Serine 653 carries the post-translational modification Phosphoserine. The span at 653–669 (SFRRMRRSRVSSRKRHP) shows a compositional bias: basic residues. A disordered region spans residues 653–689 (SFRRMRRSRVSSRKRHPAGPPGEAQEGSAKAERPGLQ). Disordered stretches follow at residues 938–975 (AETKNHRPGNGAGPKKAPSRARNSGTQSDGEEKQPGLV) and 992–1020 (STLEGDRGSGNWRSHRAAVGCSLSNGGAE). Phosphoserine occurs at positions 965 and 1015.

It belongs to the WD repeat L(2)GL family. Interacts with GPSM2/LGN, PRKCI/aPKC and PARD6B/Par-6. The complex is enhanced during mitosis. Interacts with DCAF1. Phosphorylated at Ser-653 by PRKCI. Phosphorylation is enhanced during cell polarization induced by calcium. Phosphorylation may occur during the cell-cell contact-induced cell polarization and may contribute to the segregation of LLGL2 from the PRKCI/aPKC and PARD6B/Par-6 complex.

The protein localises to the cytoplasm. In terms of biological role, part of a complex with GPSM2/LGN, PRKCI/aPKC and PARD6B/Par-6, which may ensure the correct organization and orientation of bipolar spindles for normal cell division. This complex plays roles in the initial phase of the establishment of epithelial cell polarity. The sequence is that of LLGL scribble cell polarity complex component 2 (LLGL2) from Homo sapiens (Human).